We begin with the raw amino-acid sequence, 419 residues long: UDP-N-acetylglucosamine 1-carboxyvinyltransferase (419 aa).

22–23 (KN) provides a ligand contact to phosphoenolpyruvate. UDP-N-acetyl-alpha-D-glucosamine is bound at residue Arg-91. The active-site Proton donor is the Cys-115. 2-(S-cysteinyl)pyruvic acid O-phosphothioketal is present on Cys-115. UDP-N-acetyl-alpha-D-glucosamine contacts are provided by residues 120 to 124 (RPVDL), 160 to 163 (KVSV), Asp-305, and Val-327.

Belongs to the EPSP synthase family. MurA subfamily.

It is found in the cytoplasm. It carries out the reaction phosphoenolpyruvate + UDP-N-acetyl-alpha-D-glucosamine = UDP-N-acetyl-3-O-(1-carboxyvinyl)-alpha-D-glucosamine + phosphate. Its pathway is cell wall biogenesis; peptidoglycan biosynthesis. Its function is as follows. Cell wall formation. Adds enolpyruvyl to UDP-N-acetylglucosamine. This Escherichia coli (strain K12 / MC4100 / BW2952) protein is UDP-N-acetylglucosamine 1-carboxyvinyltransferase.